We begin with the raw amino-acid sequence, 401 residues long: Probable tRNA sulfurtransferase (401 aa).

The region spanning 63 to 168 is the THUMP domain; sequence TTAEQALSYL…EREAFLYGAR (106 aa). Residues 186–187, 211–212, arginine 268, glycine 290, and glutamine 299 each bind ATP; these read LL and YF.

This sequence belongs to the ThiI family.

The protein localises to the cytoplasm. The enzyme catalyses [ThiI sulfur-carrier protein]-S-sulfanyl-L-cysteine + a uridine in tRNA + 2 reduced [2Fe-2S]-[ferredoxin] + ATP + H(+) = [ThiI sulfur-carrier protein]-L-cysteine + a 4-thiouridine in tRNA + 2 oxidized [2Fe-2S]-[ferredoxin] + AMP + diphosphate. It carries out the reaction [ThiS sulfur-carrier protein]-C-terminal Gly-Gly-AMP + S-sulfanyl-L-cysteinyl-[cysteine desulfurase] + AH2 = [ThiS sulfur-carrier protein]-C-terminal-Gly-aminoethanethioate + L-cysteinyl-[cysteine desulfurase] + A + AMP + 2 H(+). The protein operates within cofactor biosynthesis; thiamine diphosphate biosynthesis. Catalyzes the ATP-dependent transfer of a sulfur to tRNA to produce 4-thiouridine in position 8 of tRNAs, which functions as a near-UV photosensor. Also catalyzes the transfer of sulfur to the sulfur carrier protein ThiS, forming ThiS-thiocarboxylate. This is a step in the synthesis of thiazole, in the thiamine biosynthesis pathway. The sulfur is donated as persulfide by IscS. This Treponema pallidum (strain Nichols) protein is Probable tRNA sulfurtransferase.